We begin with the raw amino-acid sequence, 622 residues long: Probable Xaa-Pro aminopeptidase P (622 aa).

The Mn(2+) site is built by D419, D430, E528, and E542.

Belongs to the peptidase M24B family. Mn(2+) is required as a cofactor.

The catalysed reaction is Release of any N-terminal amino acid, including proline, that is linked to proline, even from a dipeptide or tripeptide.. Its function is as follows. Catalyzes the removal of a penultimate prolyl residue from the N-termini of peptides. This is Probable Xaa-Pro aminopeptidase P (AMPP) from Coprinopsis cinerea (strain Okayama-7 / 130 / ATCC MYA-4618 / FGSC 9003) (Inky cap fungus).